A 90-amino-acid chain; its full sequence is Putative regulatory protein Dred_1699 (90 aa).

It belongs to the RemA family.

The sequence is that of Putative regulatory protein Dred_1699 from Desulforamulus reducens (strain ATCC BAA-1160 / DSM 100696 / MI-1) (Desulfotomaculum reducens).